A 403-amino-acid polypeptide reads, in one-letter code: CCA-adding enzyme (403 aa).

Residues Gly-32 and Arg-35 each contribute to the ATP site. Positions 32 and 35 each coordinate CTP. Residues Asp-45 and Asp-47 each coordinate Mg(2+). ATP is bound by residues Arg-116, Asp-159, Arg-162, Arg-165, and Arg-168. 5 residues coordinate CTP: Arg-116, Asp-159, Arg-162, Arg-165, and Arg-168.

This sequence belongs to the tRNA nucleotidyltransferase/poly(A) polymerase family. Bacterial CCA-adding enzyme type 3 subfamily. Homodimer. Mg(2+) serves as cofactor.

The enzyme catalyses a tRNA precursor + 2 CTP + ATP = a tRNA with a 3' CCA end + 3 diphosphate. It catalyses the reaction a tRNA with a 3' CCA end + 2 CTP + ATP = a tRNA with a 3' CCACCA end + 3 diphosphate. Its function is as follows. Catalyzes the addition and repair of the essential 3'-terminal CCA sequence in tRNAs without using a nucleic acid template. Adds these three nucleotides in the order of C, C, and A to the tRNA nucleotide-73, using CTP and ATP as substrates and producing inorganic pyrophosphate. tRNA 3'-terminal CCA addition is required both for tRNA processing and repair. Also involved in tRNA surveillance by mediating tandem CCA addition to generate a CCACCA at the 3' terminus of unstable tRNAs. While stable tRNAs receive only 3'-terminal CCA, unstable tRNAs are marked with CCACCA and rapidly degraded. This is CCA-adding enzyme from Streptococcus uberis (strain ATCC BAA-854 / 0140J).